The primary structure comprises 426 residues: RuvB-like protein 1 (426 aa).

62–69 (GPVGSGKT) contributes to the ATP binding site.

Belongs to the RuvB family. As to quaternary structure, component of the SWR1 chromatin remodeling complex, the INO80 chromatin remodeling complex, and of the R2TP complex.

It localises to the nucleus. It carries out the reaction ATP + H2O = ADP + phosphate + H(+). Its function is as follows. DNA helicase which participates in several chromatin remodeling complexes, including the SWR1 and the INO80 complexes. The SWR1 complex mediates the ATP-dependent exchange of histone H2A for the H2A variant HZT1 leading to transcriptional regulation of selected genes by chromatin remodeling. The INO80 complex remodels chromatin by shifting nucleosomes and is involved in DNA repair. Also involved in pre-rRNA processing. The polypeptide is RuvB-like protein 1 (RVB1) (Encephalitozoon cuniculi (strain GB-M1) (Microsporidian parasite)).